Here is a 174-residue protein sequence, read N- to C-terminus: Histone deacetylase complex subunit SAP30 homolog (174 aa).

The segment at 22 to 70 adopts an Atypical zinc-finger fold; sequence CCLLDDGERCRKQAGNASYSKRIQKTVTQRRLKLSIDSHARHIYICDFH.

This sequence belongs to the SAP30 family. As to quaternary structure, component of the class 1 Sin3-histone deacetylase complex (HDAC).

The protein resides in the nucleus. Required for the function of the class 1 Sin3-histone deacetylase complex (HDAC). The polypeptide is Histone deacetylase complex subunit SAP30 homolog (Anopheles gambiae (African malaria mosquito)).